We begin with the raw amino-acid sequence, 103 residues long: Large ribosomal subunit protein uL24 (103 aa).

This sequence belongs to the universal ribosomal protein uL24 family. In terms of assembly, part of the 50S ribosomal subunit.

Functionally, one of two assembly initiator proteins, it binds directly to the 5'-end of the 23S rRNA, where it nucleates assembly of the 50S subunit. One of the proteins that surrounds the polypeptide exit tunnel on the outside of the subunit. The sequence is that of Large ribosomal subunit protein uL24 from Ruthia magnifica subsp. Calyptogena magnifica.